The primary structure comprises 522 residues: Glycogen synthase (522 aa).

The interval 1–29 is disordered; it reads MISAVLDTQGDHPQQQAGDRAAPSVPVPG. Lys58 lines the ADP-alpha-D-glucose pocket.

It belongs to the glycosyltransferase 1 family. Bacterial/plant glycogen synthase subfamily.

The enzyme catalyses [(1-&gt;4)-alpha-D-glucosyl](n) + ADP-alpha-D-glucose = [(1-&gt;4)-alpha-D-glucosyl](n+1) + ADP + H(+). Its pathway is glycan biosynthesis; glycogen biosynthesis. Synthesizes alpha-1,4-glucan chains using ADP-glucose. The protein is Glycogen synthase of Pseudomonas fluorescens (strain ATCC BAA-477 / NRRL B-23932 / Pf-5).